The sequence spans 511 residues: Mediator of RNA polymerase II transcription subunit 17 (511 aa).

Belongs to the Mediator complex subunit 17 family. In terms of assembly, component of the Mediator complex.

The protein localises to the nucleus. Component of the Mediator complex, a coactivator involved in the regulated transcription of nearly all RNA polymerase II-dependent genes. Mediator functions as a bridge to convey information from gene-specific regulatory proteins to the basal RNA polymerase II transcription machinery. Mediator is recruited to promoters by direct interactions with regulatory proteins and serves as a scaffold for the assembly of a functional preinitiation complex with RNA polymerase II and the general transcription factors. This Yarrowia lipolytica (strain CLIB 122 / E 150) (Yeast) protein is Mediator of RNA polymerase II transcription subunit 17 (SRB4).